A 490-amino-acid chain; its full sequence is Aspartyl/glutamyl-tRNA(Asn/Gln) amidotransferase subunit B (490 aa).

The protein belongs to the GatB/GatE family. GatB subfamily. Heterotrimer of A, B and C subunits.

It catalyses the reaction L-glutamyl-tRNA(Gln) + L-glutamine + ATP + H2O = L-glutaminyl-tRNA(Gln) + L-glutamate + ADP + phosphate + H(+). The catalysed reaction is L-aspartyl-tRNA(Asn) + L-glutamine + ATP + H2O = L-asparaginyl-tRNA(Asn) + L-glutamate + ADP + phosphate + 2 H(+). Allows the formation of correctly charged Asn-tRNA(Asn) or Gln-tRNA(Gln) through the transamidation of misacylated Asp-tRNA(Asn) or Glu-tRNA(Gln) in organisms which lack either or both of asparaginyl-tRNA or glutaminyl-tRNA synthetases. The reaction takes place in the presence of glutamine and ATP through an activated phospho-Asp-tRNA(Asn) or phospho-Glu-tRNA(Gln). The sequence is that of Aspartyl/glutamyl-tRNA(Asn/Gln) amidotransferase subunit B from Prochlorococcus marinus (strain MIT 9312).